We begin with the raw amino-acid sequence, 545 residues long: Cytochrome P450 monooxygenase 212 (545 aa).

An N-terminal signal peptide occupies residues 1–14 (MAAYAWLYCALALG). Cys-486 contacts heme.

This sequence belongs to the cytochrome P450 family. The cofactor is heme.

It participates in secondary metabolite biosynthesis. Its function is as follows. Cytochrome P450 monooxygenase that is able to use anthracene and pyrene as substrates for oxidation. The protein is Cytochrome P450 monooxygenase 212 of Postia placenta (strain ATCC 44394 / Madison 698-R) (Brown rot fungus).